The primary structure comprises 570 residues: Phosphoenolpyruvate-protein phosphotransferase (570 aa).

The Tele-phosphohistidine intermediate role is filled by H189. Phosphoenolpyruvate is bound by residues R296 and R332. E431 and D455 together coordinate Mg(2+). Residues 454 to 455 and R465 contribute to the phosphoenolpyruvate site; that span reads ND. Catalysis depends on C502, which acts as the Proton donor.

This sequence belongs to the PEP-utilizing enzyme family. As to quaternary structure, homodimer. Interacts with FloT. It depends on Mg(2+) as a cofactor.

Its subcellular location is the cytoplasm. It localises to the membrane raft. The enzyme catalyses L-histidyl-[protein] + phosphoenolpyruvate = N(pros)-phospho-L-histidyl-[protein] + pyruvate. In terms of biological role, general (non sugar-specific) component of the phosphoenolpyruvate-dependent sugar phosphotransferase system (sugar PTS). This major carbohydrate active-transport system catalyzes the phosphorylation of incoming sugar substrates concomitantly with their translocation across the cell membrane. Enzyme I transfers the phosphoryl group from phosphoenolpyruvate (PEP) to the phosphoryl carrier protein (HPr). The sequence is that of Phosphoenolpyruvate-protein phosphotransferase (ptsI) from Bacillus subtilis (strain 168).